Consider the following 132-residue polypeptide: uncharacterized protein (132 aa).

The signal sequence occupies residues 1–17 (MCPECFFLMLFFCGYRA). Positions 25–39 (SSSSSSSSSSSFRSS) are enriched in low complexity. Positions 25 to 79 (SSSSSSSSSSSFRSSPAYGFSGRPPGGAGCRERSQRSCLRPGGLPSLTRNPGLQR) are disordered.

This is an uncharacterized protein from Escherichia coli (strain K12).